The primary structure comprises 214 residues: uncharacterized protein (214 aa).

Residues 9-31 traverse the membrane as a helical segment; sequence FLYFAISVLVNLLFLKILYIYLF. The tract at residues 53-74 is disordered; that stretch reads APPKKPGKPQKKVVKKKPEAVS. A compositionally biased stretch (basic residues) spans 54 to 67; the sequence is PPKKPGKPQKKVVK.

Its subcellular location is the membrane. This is an uncharacterized protein from Aquifex aeolicus (strain VF5).